The following is a 152-amino-acid chain: Large-conductance mechanosensitive channel (152 aa).

A run of 3 helical transmembrane segments spans residues 26–46 (VLDL…VGSA), 50–70 (ILTP…LFIT), and 92–112 (IGVF…IFWL).

Belongs to the MscL family. In terms of assembly, homopentamer.

The protein localises to the cell inner membrane. In terms of biological role, channel that opens in response to stretch forces in the membrane lipid bilayer. May participate in the regulation of osmotic pressure changes within the cell. This chain is Large-conductance mechanosensitive channel, found in Gluconobacter oxydans (strain 621H) (Gluconobacter suboxydans).